Reading from the N-terminus, the 564-residue chain is MFS-type transporter astH (564 aa).

Asn23 carries N-linked (GlcNAc...) asparagine glycosylation. Positions 26–59 are disordered; that stretch reads KDTLVNCSPDPENPEKGQASSPRTQISVDDNEES. Polar residues predominate over residues 43–53; sequence QASSPRTQISV. The next 4 helical transmembrane spans lie at 69–89, 106–126, 143–163, and 197–217; these read LAMIMISLCLAVFCLALDTTI, DVGWYGSAYLLTTSALTLSFG, GMFEIGSLICGATPNSLGLII, and GILGGLFGVASVVGPLIGGAF. The N-linked (GlcNAc...) asparagine glycan is linked to Asn220. The next 6 helical transmembrane spans lie at 225–245, 266–286, 297–317, 339–359, 375–395, and 396–416; these read WCFYINLPLGAVTGLFLILFF, LLGSLCFLPAIICVLLALQWG, IIALFTVFGVLLLAFAGVQWW, LFSFCLNASFIIFTYYLPMWF, LPMVLAVVIFSIISGGLVGAL, and GYYTPFMVIAPLIAAIGAGLL. The N-linked (GlcNAc...) asparagine glycan is linked to Asn425. Transmembrane regions (helical) follow at residues 461–481 and 537–557; these read TGTVIVMFMQTIGGAIFMSVG and FYVAVAMAVLALPGALVMQWI.

It belongs to the major facilitator superfamily. TCR/Tet family.

The protein resides in the membrane. Functionally, MFS-type transporter; part of the gene cluster that mediates the biosynthesis of astellolides, drimane-type sesquiterpene esters that show antimicrobial, anti-inflammatory, and anti-tumor activities. Seems not to be involved in astellolides translocation. The sequence is that of MFS-type transporter astH from Aspergillus oryzae (strain ATCC 42149 / RIB 40) (Yellow koji mold).